A 638-amino-acid chain; its full sequence is Actin-regulating kinase 1 (638 aa).

In terms of domain architecture, Protein kinase spans 22-298 (VEIIKYLTSG…VYQLLKRISI (277 aa)). ATP-binding positions include 28–36 (LTSGGFAQV) and Lys56. The active-site Proton acceptor is the Asp159. At Ser478 the chain carries Phosphoserine. The span at 482-515 (YSTRGNIKKNQSVKESLTSSSLPGTSFTPTSTKV) shows a compositional bias: polar residues. The disordered stretch occupies residues 482–518 (YSTRGNIKKNQSVKESLTSSSLPGTSFTPTSTKVNLK). Phosphoserine occurs at positions 522 and 535. Residues 569 to 638 (SEESFNARKM…LAGRKLSLDK (70 aa)) are disordered. Over residues 582–593 (KLHEKGEIDKPT) the composition is skewed to basic and acidic residues. Residues 602–615 (SKDKKTKPTPPPKP) are interaction with SH3 domain of ABP1.

Belongs to the protein kinase superfamily. Ser/Thr protein kinase family. As to quaternary structure, interacts with ABP1, which is required for proper actin patch localization.

The protein localises to the cytoplasm. Its subcellular location is the cytoskeleton. It is found in the actin patch. The catalysed reaction is L-seryl-[protein] + ATP = O-phospho-L-seryl-[protein] + ADP + H(+). It catalyses the reaction L-threonyl-[protein] + ATP = O-phospho-L-threonyl-[protein] + ADP + H(+). Its function is as follows. Involved in regulation of actin cytoskeleton organization and endocytosis. This chain is Actin-regulating kinase 1 (ARK1), found in Saccharomyces cerevisiae (strain ATCC 204508 / S288c) (Baker's yeast).